Reading from the N-terminus, the 882-residue chain is Valine--tRNA ligase (882 aa).

The 'HIGH' region motif lies at 45–55 (PNVTGKLHLGH). The short motif at 519–523 (KMSKS) is the 'KMSKS' region element. Lysine 522 is an ATP binding site. The stretch at 808–877 (LADLLNVEEE…DATQERIVEM (70 aa)) forms a coiled coil.

This sequence belongs to the class-I aminoacyl-tRNA synthetase family. ValS type 1 subfamily. As to quaternary structure, monomer.

It localises to the cytoplasm. The catalysed reaction is tRNA(Val) + L-valine + ATP = L-valyl-tRNA(Val) + AMP + diphosphate. Functionally, catalyzes the attachment of valine to tRNA(Val). As ValRS can inadvertently accommodate and process structurally similar amino acids such as threonine, to avoid such errors, it has a 'posttransfer' editing activity that hydrolyzes mischarged Thr-tRNA(Val) in a tRNA-dependent manner. This chain is Valine--tRNA ligase, found in Streptococcus pyogenes serotype M6 (strain ATCC BAA-946 / MGAS10394).